The primary structure comprises 238 residues: Isoprene-epoxide--glutathione S-transferase (238 aa).

The 76-residue stretch at 7–82 (YVPAWGIPDI…YLKNKFGDKL (76 aa)) folds into the GST N-terminal domain. One can recognise a GST C-terminal domain in the interval 118-238 (DAGWETYIPF…LERIRKQYDI (121 aa)).

It belongs to the GST superfamily. As to quaternary structure, homodimer.

The catalysed reaction is 2-glutathionyl-2-methylbut-3-en-1-ol = (3R)-3,4-epoxy-3-methylbut-1-ene + glutathione. Activity is inhibited by 1,2-epoxyhexane. Involved in isoprene degradation. Catalyzes the glutathione-dependent ring opening of various epoxides. The highest conversion rate is observed with the physiological substrate, 3,4-epoxy-3-methyl-1-butene, which is the primary oxidation product of isoprene. It can also use other epoxides, including epoxyethane, epoxypropane, epithiopropane, epichlorohydrin, epifluorohydrin, epibromohydrin, 1,2-epoxybutane, 1,2-epoxyhexane, cis-2,3-epoxybutane, cis-1,2-dichloroepoxyethane and trans-1,2-dichloroepoxyethane. The sequence is that of Isoprene-epoxide--glutathione S-transferase from Rhodococcus sp. (strain AD45).